We begin with the raw amino-acid sequence, 436 residues long: bZIP transcription factor RISBZ1 (436 aa).

Residues 1–27 are required for transactivation activity; the sequence is MEHVFAVDEIPDPLWAPPPPVQPAAAA. The interval 182–258 is disordered; it reads LSPGPNGGSG…SARRSRSRKA (77 aa). Over residues 215–225 the composition is skewed to acidic residues; the sequence is PSEDDDMEGDA. The bZIP domain maps to 236-299; it reads EDKVKKRKES…SAAAIDNRVL (64 aa). Residues 238–257 are basic motif; the sequence is KVKKRKESNRESARRSRSRK. The leucine-zipper stretch occupies residues 264–278; that stretch reads LEEQVSLLRVENSSL.

In terms of assembly, homodimer. Forms heterodimers with RISBZ2/BZP33 and RISBZ3/BZP20. Interacts with DOF3/RPBF. As to expression, specifically expressed in seeds. Expressed in aleurone and subaleurone layers of maturing seeds, but not in the embryo tissues.

It localises to the nucleus. Its function is as follows. Transcriptional activator that binds to the DNA specific sequence 5'-TGAGTCA-3' found in seed storage protein gene promoters. Involved in the endosperm-specific regulation of storage protein genes. Can activate the expression of genes encoding for the seed storage proteins glutelin, prolamin, globulin and the allergen RAG1. Functions synergistically with DOF3/RPBF to positively regulate quantitatively many seed storage protein genes. Functions synergistically with DOF3/RPBF to positively regulate some metabolic enzymes, such as alanine aminotransferase and pyruvate phosphate dikinase, that are expressed in developing seeds. Functions synergistically with DOF3/RPBF to positively regulate genes that are key players in the development of aleurone layers. Functions synergistically with DOF3/RPBF to positively regulate the glutelin GLUD-1 gene in endosperm of developing seeds. Can activate the expression of the bifunctional lysine-degrading enzyme, lysine ketoglutarate reductase/saccharopine dehydrogenase (LKR/SDH), one of the key regulators determining free lysine content in plants. Functions as a key regulator of starch synthesis in seeds, by direct binding to the promoters of starch-synthesizing genes, such as AGPL3, WAXXY and SBE1. In Oryza sativa subsp. japonica (Rice), this protein is bZIP transcription factor RISBZ1.